The primary structure comprises 195 residues: Fe/S biogenesis protein NfuA (195 aa).

Residues cysteine 152 and cysteine 155 each coordinate [4Fe-4S] cluster.

This sequence belongs to the NfuA family. In terms of assembly, homodimer. [4Fe-4S] cluster is required as a cofactor.

Involved in iron-sulfur cluster biogenesis. Binds a 4Fe-4S cluster, can transfer this cluster to apoproteins, and thereby intervenes in the maturation of Fe/S proteins. Could also act as a scaffold/chaperone for damaged Fe/S proteins. The protein is Fe/S biogenesis protein NfuA of Vibrio cholerae serotype O1 (strain ATCC 39315 / El Tor Inaba N16961).